Reading from the N-terminus, the 151-residue chain is Aspartate carbamoyltransferase regulatory chain (151 aa).

The Zn(2+) site is built by cysteine 107, cysteine 112, cysteine 135, and cysteine 138.

Belongs to the PyrI family. Contains catalytic and regulatory chains. It depends on Zn(2+) as a cofactor.

In terms of biological role, involved in allosteric regulation of aspartate carbamoyltransferase. In Thermococcus gammatolerans (strain DSM 15229 / JCM 11827 / EJ3), this protein is Aspartate carbamoyltransferase regulatory chain.